Consider the following 138-residue polypeptide: Iron sulfur cluster assembly protein 1 (138 aa).

This sequence belongs to the NifU family. Component of the core Fe-S cluster (ISC) assembly machinery. The cofactor is [2Fe-2S] cluster.

The protein resides in the cytoplasm. Its pathway is cofactor biosynthesis; iron-sulfur cluster biosynthesis. In terms of biological role, scaffold protein for the de novo synthesis of iron-sulfur (Fe-S) clusters within mitosomes, which is required for maturation of both [2Fe-2S] and [4Fe-4S] proteins. First, a [2Fe-2S] cluster is transiently assembled on the scaffold protein ISU1. In a second step, the cluster is released from ISU1, transferred to a glutaredoxin, followed by the formation of [2Fe-2S] proteins, the synthesis of [4Fe-4S] clusters and their target-specific insertion into the recipient apoproteins. Cluster assembly on ISU1 depends on the function of the cysteine desulfurase complex NFS1-ISD11, which serves as the sulfur donor for cluster synthesis, the iron-binding protein frataxin as the putative iron donor, and the electron transfer chain comprised of ferredoxin reductase and ferredoxin, which receive their electrons from NADH. The chain is Iron sulfur cluster assembly protein 1 (ISU1) from Trachipleistophora hominis (Microsporidian parasite).